Consider the following 290-residue polypeptide: Lipoyl synthase (290 aa).

[4Fe-4S] cluster-binding residues include Cys38, Cys43, Cys49, Cys64, Cys68, Cys71, and Ser277. Residues 50 to 266 (WSKGTATFLL…REIALDAGFR (217 aa)) form the Radical SAM core domain.

It belongs to the radical SAM superfamily. Lipoyl synthase family. The cofactor is [4Fe-4S] cluster.

The protein resides in the cytoplasm. The catalysed reaction is [[Fe-S] cluster scaffold protein carrying a second [4Fe-4S](2+) cluster] + N(6)-octanoyl-L-lysyl-[protein] + 2 oxidized [2Fe-2S]-[ferredoxin] + 2 S-adenosyl-L-methionine + 4 H(+) = [[Fe-S] cluster scaffold protein] + N(6)-[(R)-dihydrolipoyl]-L-lysyl-[protein] + 4 Fe(3+) + 2 hydrogen sulfide + 2 5'-deoxyadenosine + 2 L-methionine + 2 reduced [2Fe-2S]-[ferredoxin]. It functions in the pathway protein modification; protein lipoylation via endogenous pathway; protein N(6)-(lipoyl)lysine from octanoyl-[acyl-carrier-protein]: step 2/2. Functionally, catalyzes the radical-mediated insertion of two sulfur atoms into the C-6 and C-8 positions of the octanoyl moiety bound to the lipoyl domains of lipoate-dependent enzymes, thereby converting the octanoylated domains into lipoylated derivatives. In Chlorobaculum tepidum (strain ATCC 49652 / DSM 12025 / NBRC 103806 / TLS) (Chlorobium tepidum), this protein is Lipoyl synthase.